A 176-amino-acid chain; its full sequence is Ubiquinol-cytochrome c reductase iron-sulfur subunit (176 aa).

The chain crosses the membrane as a helical span at residues 15–36; the sequence is FLFVATGAAAAVGGAAALWPFI. In terms of domain architecture, Rieske spans 87-174; that stretch reads ARAVNVASLP…YQFVSDTKIQ (88 aa). [2Fe-2S] cluster-binding residues include Cys-119, His-121, Cys-138, and His-141. Cys-124 and Cys-140 are oxidised to a cystine.

Belongs to the Rieske iron-sulfur protein family. As to quaternary structure, the main subunits of complex b-c1 are: cytochrome b, cytochrome c1 and the Rieske protein. It depends on [2Fe-2S] cluster as a cofactor.

It localises to the cell membrane. The catalysed reaction is a quinol + 2 Fe(III)-[cytochrome c](out) = a quinone + 2 Fe(II)-[cytochrome c](out) + 2 H(+)(out). Component of the ubiquinol-cytochrome c reductase complex (complex III or cytochrome b-c1 complex), which is a respiratory chain that generates an electrochemical potential coupled to ATP synthesis. The polypeptide is Ubiquinol-cytochrome c reductase iron-sulfur subunit (petA) (Bradyrhizobium diazoefficiens (strain JCM 10833 / BCRC 13528 / IAM 13628 / NBRC 14792 / USDA 110)).